A 227-amino-acid polypeptide reads, in one-letter code: E3 ubiquitin-protein ligase RNF186 (227 aa).

Residues 40-86 (CLVCREPYSCPRLPKLLACQHAFCAICLKLLLCVQDNTWSITCPLCR) form an RING-type zinc finger. A run of 2 helical transmembrane segments spans residues 158-178 (HLLL…PGVL) and 180-200 (WVLT…CCLP).

In terms of assembly, interacts with BNIP1. Polyubiquitinated. 'Lys-29'-linked autoubiquitination leads to proteasomal degradation.

The protein resides in the endoplasmic reticulum membrane. It carries out the reaction S-ubiquitinyl-[E2 ubiquitin-conjugating enzyme]-L-cysteine + [acceptor protein]-L-lysine = [E2 ubiquitin-conjugating enzyme]-L-cysteine + N(6)-ubiquitinyl-[acceptor protein]-L-lysine.. The protein operates within protein modification; protein ubiquitination. Its function is as follows. E3 ubiquitin protein ligase that is part of an apoptotic signaling pathway activated by endoplasmic reticulum stress. Stimulates the expression of proteins specific of the unfolded protein response (UPR), ubiquitinates BNIP1 and regulates its localization to the mitochondrion and induces calcium release from the endoplasmic reticulum that ultimately leads to cell apoptosis. Plays a role in the maintenance of intestinal homeostasis and clearance of enteric pathogens. Upon NOD2 stimulation, ubiquitinates the ER stress sensor activating transcription factor 6/ATF6 and promotes the unfolded protein response UPR. Participates in basal level of autophagy maintenance by regulating the ubiquitination of EPHB2 and EPHB3. Upon stimulation by ligand EFNB1, ubiquitinates EPHB2 and further recruits MAP1LC3B for autophagy induction. Controls nutrient sensing by ubiquitinating Sestrin-2/SESN2, which is an intracellular sensor of cytosolic leucine and inhibitor of mTORC1 activity. This chain is E3 ubiquitin-protein ligase RNF186, found in Homo sapiens (Human).